A 197-amino-acid chain; its full sequence is Nucleoid occlusion factor SlmA (197 aa).

In terms of domain architecture, HTH tetR-type spans 7-67 (INRREHILQC…GLIDFIEESL (61 aa)). Positions 30–49 (TTAKLAAEVGVSEAALYRHF) form a DNA-binding region, H-T-H motif.

It belongs to the nucleoid occlusion factor SlmA family. Homodimer. Interacts with FtsZ.

It localises to the cytoplasm. The protein resides in the nucleoid. Required for nucleoid occlusion (NO) phenomenon, which prevents Z-ring formation and cell division over the nucleoid. Acts as a DNA-associated cell division inhibitor that binds simultaneously chromosomal DNA and FtsZ, and disrupts the assembly of FtsZ polymers. SlmA-DNA-binding sequences (SBS) are dispersed on non-Ter regions of the chromosome, preventing FtsZ polymerization at these regions. The protein is Nucleoid occlusion factor SlmA of Shewanella woodyi (strain ATCC 51908 / MS32).